Consider the following 451-residue polypeptide: Ammonium transporter Rh type B (451 aa).

Over Met1–Lys11 the chain is Cytoplasmic. A helical membrane pass occupies residues Leu12–Gln32. Residues Tyr33 to Asp63 lie on the Extracellular side of the membrane. N-linked (GlcNAc...) asparagine glycosylation occurs at Asn44. Residues Val64–Phe84 form a helical membrane-spanning segment. At Gly85–Val87 the chain is on the cytoplasmic side. A helical transmembrane segment spans residues Gly88 to Phe108. Topologically, residues His109–Glu121 are extracellular. A helical membrane pass occupies residues Ser122–Gly142. The Cytoplasmic portion of the chain corresponds to Lys143–Thr151. A helical membrane pass occupies residues Met152–Gly172. The Extracellular segment spans residues Thr173–Ala176. The chain crosses the membrane as a helical span at residues Gly177–Leu197. Over Tyr198–Asp216 the chain is Cytoplasmic. A helical membrane pass occupies residues Leu217 to Ile237. Residues Thr238–Thr247 lie on the Extracellular side of the membrane. A helical transmembrane segment spans residues Ala248–Ser270. Residues His271–Lys274 are Cytoplasmic-facing. Residues Leu275 to Gly295 traverse the membrane as a helical segment. At Glu296 to Met298 the chain is on the extracellular side. A helical transmembrane segment spans residues Leu299–Phe319. Residues Lys320 to Asn340 lie on the Cytoplasmic side of the membrane. A helical transmembrane segment spans residues Leu341–Thr361. The Extracellular portion of the chain corresponds to Met362–Gln390. Residues Ala391–Gly411 traverse the membrane as a helical segment. At Thr412–Ser451 the chain is on the cytoplasmic side.

It belongs to the ammonium transporter (TC 2.A.49) family. Rh subfamily.

The protein resides in the basolateral cell membrane. The protein localises to the cytoplasmic vesicle membrane. In terms of biological role, functions as an ammonia transporter. May play a role in the elimination of ammonia in the gill. This chain is Ammonium transporter Rh type B (rhbg), found in Tetraodon nigroviridis (Spotted green pufferfish).